We begin with the raw amino-acid sequence, 82 residues long: MAAGSTGERPFFEIITSIRYWVIHAVTLPSIFLAGFLFVSTGLAYDAFGTPRPDAYFQASESKAPVVSQRYEGKSELDIRLK.

The helical transmembrane segment at Val-22–Phe-36 threads the bilayer. Heme is bound at residue His-24.

The protein belongs to the PsbE/PsbF family. Heterodimer of an alpha subunit and a beta subunit. PSII is composed of 1 copy each of membrane proteins PsbA, PsbB, PsbC, PsbD, PsbE, PsbF, PsbH, PsbI, PsbJ, PsbK, PsbL, PsbM, PsbT, PsbX, PsbY, PsbZ, Psb30/Ycf12, peripheral proteins PsbO, CyanoQ (PsbQ), PsbU, PsbV and a large number of cofactors. It forms dimeric complexes. Heme b serves as cofactor.

It localises to the cellular thylakoid membrane. In terms of biological role, this b-type cytochrome is tightly associated with the reaction center of photosystem II (PSII). PSII is a light-driven water:plastoquinone oxidoreductase that uses light energy to abstract electrons from H(2)O, generating O(2) and a proton gradient subsequently used for ATP formation. It consists of a core antenna complex that captures photons, and an electron transfer chain that converts photonic excitation into a charge separation. The protein is Cytochrome b559 subunit alpha of Synechococcus sp. (strain CC9605).